The chain runs to 658 residues: MSAFLDKLSGSQCVSLEKCGDVVVSTNDCMIALYCHFCRDLFTQLPEFLRHLQGAHSDVLHFTKEHNVYSVEELMSGEQDDAQEDAHSAGHNSSSGDSRIPAKSEDSRAIDASEDNSDNSPVKSEQKGMQNEINLLAEVTNILLQSKEREHINNESKPENGGFNGPCKKASSESNSLRICDLKSHTIARTSRKRMSMLKNRILRVIDSDVSAKREMKPSEPNYILPITETIQEDNIPKICFETQPKPIPSSSNLSVRKSSLSEPNVSLACTNYAAKKTTLTIPKLLNCTPKSNLPCQQSQVYSDSNGRSETYHISKATSQGSKEMESFPVKITQIDVLPPLILPETSTTPNQKERVNALVENNTVNLYTAQNLPKEKPKKFFKKRGELWMKSEDSPSKSVKITKYRGNPIIVKRVQTSSAKSSPCKTQIRSNDKTKCFASEFNSTKIRKLKMENSIALKKEDPCSNKSIRLSKMATISSCEILKVVGLPAITDQKLEDTLLLDELETMRKKADQFSKIYKKYDSIWNYRKIFPPGKPEFISQKMFALTREVNETMGCNLANSAIKSIINQISVWHYNIYTKCIVLDTISETARHTLKLFSFLPVSFAYFCKCCDDIFTLNEDYTRHLVSQQARYQCTKCIKAFKYRGHFEKHLQNVHP.

Residues 33–56 (LYCHFCRDLFTQLPEFLRHLQGAH) form a C2H2-type 1 zinc finger. Disordered regions lie at residues 78–127 (EQDD…SEQK) and 151–175 (HINNESKPENGGFNGPCKKASSESN). A compositionally biased stretch (basic and acidic residues) spans 100–111 (IPAKSEDSRAID). Residues 118-127 (DNSPVKSEQK) are compositionally biased toward polar residues. The C2H2-type 2; degenerate zinc finger occupies 608 to 630 (YFCKCCDDIFTLNEDYTRHLVSQ). A C2H2-type 3 zinc finger spans residues 634–657 (YQCTKCIKAFKYRGHFEKHLQNVH).

It belongs to the Teflon family.

The protein localises to the nucleus. The protein resides in the chromosome. Specifically required in males for proper segregation of autosomal bivalents at meiosis I. Expression is required in the male germ line prior to spermatocyte stage S4. May have a role as a bridging molecule maintaining adhesion to hold autosome bivalents together via heterochromatic connections. In Drosophila erecta (Fruit fly), this protein is Protein teflon.